The chain runs to 303 residues: MNFQELILRLHNFWGQQGCIIQQPYDVEKGAGTMNPATFLRALGPEPWKVAYVEPSRRPTDGRYGENPNRLQHYYQYQVILKPSPDNVIDLYLASLRDLGIEPEKHDIRLVEDNWESPTLGAWGLGWEIWLDGMEITQFTYFQQCGGFDCLPVSAEITYGIERIAMYIQNKESVFDIEWVDGISYADVHHQAEVDYSHYNFEAADVGALTSMFNICEEEAIRVAERQLVQPAYDYVLKCSHLFNLLDARGAISVTERTAYIGRVRNLARMVAREYLEQRKRLNYPLLKDEKLRKQLIIEEEVL.

The protein belongs to the class-II aminoacyl-tRNA synthetase family. As to quaternary structure, tetramer of two alpha and two beta subunits.

It localises to the cytoplasm. It carries out the reaction tRNA(Gly) + glycine + ATP = glycyl-tRNA(Gly) + AMP + diphosphate. The protein is Glycine--tRNA ligase alpha subunit of Syntrophomonas wolfei subsp. wolfei (strain DSM 2245B / Goettingen).